A 657-amino-acid chain; its full sequence is Major core protein 4b (657 aa).

A propeptide spanning residues 1 to 61 (MESDSNIAIE…ITEEDVISAG (61 aa)) is cleaved from the precursor.

Belongs to the poxviridae protein P4b family. Post-translationally, the precursor is cleaved to a mature protein during virion maturation. Proteolytic cleavage of major core proteins P4a (A10L), P4b (A3L), and VP8 (L4R), which occurs at a late stage of core formation, is required for production of infectious mature virions (MV).

It localises to the virion. Functionally, major component of the virion core that undergoes proteolytic processing during the immature virion (IV) to mature virion (MV) transition. Essential for the formation of a structurally normal core. This chain is Major core protein 4b, found in Vertebrata (FPV).